Consider the following 248-residue polypeptide: Adenosylcobinamide-GDP ribazoletransferase (248 aa).

6 consecutive transmembrane segments (helical) span residues 36–56 (FFLP…YLAL), 59–79 (FLPP…ITGG), 114–134 (GTIA…SLVL), 137–157 (YSIA…FLCL), 170–190 (IFIG…VLAL), and 199–219 (ATII…LLCL).

It belongs to the CobS family. It depends on Mg(2+) as a cofactor.

The protein localises to the cell membrane. The enzyme catalyses alpha-ribazole + adenosylcob(III)inamide-GDP = adenosylcob(III)alamin + GMP + H(+). The catalysed reaction is alpha-ribazole 5'-phosphate + adenosylcob(III)inamide-GDP = adenosylcob(III)alamin 5'-phosphate + GMP + H(+). The protein operates within cofactor biosynthesis; adenosylcobalamin biosynthesis; adenosylcobalamin from cob(II)yrinate a,c-diamide: step 7/7. Functionally, joins adenosylcobinamide-GDP and alpha-ribazole to generate adenosylcobalamin (Ado-cobalamin). Also synthesizes adenosylcobalamin 5'-phosphate from adenosylcobinamide-GDP and alpha-ribazole 5'-phosphate. In Clostridium botulinum (strain Okra / Type B1), this protein is Adenosylcobinamide-GDP ribazoletransferase.